Consider the following 481-residue polypeptide: Proline--tRNA ligase (481 aa).

Belongs to the class-II aminoacyl-tRNA synthetase family. ProS type 3 subfamily. In terms of assembly, homodimer.

The protein resides in the cytoplasm. It catalyses the reaction tRNA(Pro) + L-proline + ATP = L-prolyl-tRNA(Pro) + AMP + diphosphate. Catalyzes the attachment of proline to tRNA(Pro) in a two-step reaction: proline is first activated by ATP to form Pro-AMP and then transferred to the acceptor end of tRNA(Pro). This Pelodictyon phaeoclathratiforme (strain DSM 5477 / BU-1) protein is Proline--tRNA ligase.